The primary structure comprises 456 residues: Phosphomannomutase (456 aa).

The active-site Phosphoserine intermediate is the Ser98. Residues Ser98, Asp246, Asp248, and Asp250 each contribute to the Mg(2+) site.

It belongs to the phosphohexose mutase family. The cofactor is Mg(2+).

It catalyses the reaction alpha-D-mannose 1-phosphate = D-mannose 6-phosphate. It participates in nucleotide-sugar biosynthesis; GDP-alpha-D-mannose biosynthesis; alpha-D-mannose 1-phosphate from D-fructose 6-phosphate: step 2/2. The protein operates within bacterial outer membrane biogenesis; LPS O-antigen biosynthesis. Involved in GDP-mannose biosynthesis which serves as the activated sugar nucleotide precursor for mannose residues in cell surface polysaccharides. This enzyme participates in synthesis of the LPS O9 antigen. The polypeptide is Phosphomannomutase (manB) (Escherichia coli).